The chain runs to 237 residues: Cell division cycle-associated protein 4 (237 aa).

An SERTA domain is found at 26–73 (YSLQRQSLLDMSLVKLQLCHMLVEPNLCRSVLIANTVRQIQEEMSQDG).

In terms of tissue distribution, expressed preferentially in hematopoietic progenitors and mature blood cells. Expressed at low levels in the heart, lung, spleen, and thymus and at a higher level in muscle.

Its subcellular location is the nucleus. In terms of biological role, may participate in the regulation of cell proliferation through the E2F/RB pathway. May be involved in molecular regulation of hematopoietic stem cells and progenitor cell lineage commitment and differentiation. This is Cell division cycle-associated protein 4 (Cdca4) from Mus musculus (Mouse).